The primary structure comprises 99 residues: A-type ATP synthase subunit F (99 aa).

The protein belongs to the V-ATPase F subunit family. As to quaternary structure, has multiple subunits with at least A(3), B(3), C, D, E, F, H, I and proteolipid K(x).

The protein resides in the cell membrane. Functionally, component of the A-type ATP synthase that produces ATP from ADP in the presence of a proton gradient across the membrane. This is A-type ATP synthase subunit F from Methanococcus aeolicus (strain ATCC BAA-1280 / DSM 17508 / OCM 812 / Nankai-3).